The sequence spans 471 residues: Venom prothrombin activator vestarin-D2 (471 aa).

The first 20 residues, Met-1–Ala-20, serve as a signal peptide directing secretion. The propeptide occupies Glu-21 to Arg-40. A Gla domain is found at Ala-41 to Asp-86. 10 positions are modified to 4-carboxyglutamate: Glu-46, Glu-47, Glu-54, Glu-56, Glu-59, Glu-60, Glu-65, Glu-66, Glu-69, and Glu-75. Residues Cys-57 and Cys-62 are joined by a disulfide bond. An EGF-like 1; calcium-binding domain is found at Asp-86–Glu-122. Cystine bridges form between Cys-90–Cys-101, Cys-95–Cys-110, Cys-112–Cys-121, Cys-129–Cys-140, Cys-136–Cys-149, Cys-151–Cys-164, Cys-172–Cys-333, Cys-233–Cys-238, Cys-381–Cys-395, and Cys-406–Cys-434. Ser-92 carries O-linked (Hex...) serine glycosylation. The EGF-like 2 domain occupies Cys-129–Cys-164. Positions Arg-182 to Arg-226 are cleaved as a propeptide — activation peptide. Residues Ile-227–Arg-458 form the Peptidase S1 domain. His-268 (charge relay system) is an active-site residue. Residue Asn-271 is glycosylated (N-linked (GlcNAc...) asparagine). Asp-313 (charge relay system) is an active-site residue. The active-site Charge relay system is the Ser-410.

It belongs to the peptidase S1 family. Snake venom subfamily. Heterodimer of a light chain and a heavy chain; disulfide-linked. Post-translationally, the vitamin K-dependent, enzymatic carboxylation of some glutamate residues allows the modified protein to bind calcium. Expressed by the venom gland.

It localises to the secreted. It carries out the reaction Selective cleavage of Arg-|-Thr and then Arg-|-Ile bonds in prothrombin to form thrombin.. Its function is as follows. Snake prothrombin activator that attacks the hemostatic system of prey. This protein is functionally similar to blood coagulation factor Xa. In Demansia vestigiata (Lesser black whip snake), this protein is Venom prothrombin activator vestarin-D2.